We begin with the raw amino-acid sequence, 857 residues long: Facilitated trehalose transporter Tret1-1 (857 aa).

2 disordered regions span residues M1–K27 and S92–S203. Over M1–Y392 the chain is Cytoplasmic. Positions E134 to Q143 are enriched in basic and acidic residues. Polar residues predominate over residues G171 to A181. Phosphoserine is present on residues S248, S249, S250, S320, and S322. Positions L327–S346 are disordered. Residues R330–T341 show a composition bias toward polar residues. The chain crosses the membrane as a helical span at residues I393–V413. Over S414 to S440 the chain is Extracellular. An N-linked (GlcNAc...) asparagine glycan is attached at N428. A helical membrane pass occupies residues W441 to I461. At E462–T473 the chain is on the cytoplasmic side. The chain crosses the membrane as a helical span at residues A474 to L494. The Extracellular portion of the chain corresponds to C495 to R497. Residues F498–T518 traverse the membrane as a helical segment. Topologically, residues V519 to G528 are cytoplasmic. A helical transmembrane segment spans residues L529–M549. N-linked (GlcNAc...) asparagine glycosylation occurs at N550. At N550 to S552 the chain is on the extracellular side. Residues M553–P573 form a helical membrane-spanning segment. Residues E574–P636 lie on the Cytoplasmic side of the membrane. Residues L637–F657 form a helical membrane-spanning segment. At Y658 to N673 the chain is on the extracellular side. A helical membrane pass occupies residues L674 to I694. Residues D695–K700 lie on the Cytoplasmic side of the membrane. Residues I701–F721 traverse the membrane as a helical segment. Over Y722–C740 the chain is Extracellular. A helical transmembrane segment spans residues F741–G761. Over E762–K767 the chain is Cytoplasmic. A helical membrane pass occupies residues I768 to T788. The Extracellular portion of the chain corresponds to K789 to H801. The chain crosses the membrane as a helical span at residues G802–V822. At P823–M857 the chain is on the cytoplasmic side. A phosphoserine mark is found at S845 and S846.

It belongs to the major facilitator superfamily. Sugar transporter (TC 2.A.1.1) family. Trehalose transporter subfamily.

It is found in the cell membrane. Functionally, low-capacity facilitative transporter for trehalose. Does not transport maltose, sucrose or lactose. Mediates the bidirectional transfer of trehalose. Responsible for the transport of trehalose synthesized in the fat body and the incorporation of trehalose into other tissues that require a carbon source, thereby regulating trehalose levels in the hemolymph. This chain is Facilitated trehalose transporter Tret1-1, found in Drosophila sechellia (Fruit fly).